The sequence spans 662 residues: Glutathione hydrolase 7 (662 aa).

Over 1–106 the chain is Cytoplasmic; the sequence is MAAENEASQE…ASECSCRQDG (106 aa). Phosphoserine occurs at positions 17, 72, 79, and 83. The disordered stretch occupies residues 26–90; that stretch reads SFPRLPEDEP…DGSPLRETRK (65 aa). A compositionally biased stretch (low complexity) spans 72-83; sequence SSSSEMGSQDGS. A helical; Signal-anchor for type II membrane protein membrane pass occupies residues 107–127; it reads LTVIVTACLTFATGVTVALIM. Over 128–662 the chain is Extracellular; that stretch reads QIYFGDPQIF…SPDAAGATIL (535 aa). 9 N-linked (GlcNAc...) asparagine glycosylation sites follow: N198, N267, N283, N330, N353, N394, N452, N519, and N586.

The protein belongs to the gamma-glutamyltransferase family. As to quaternary structure, heterodimer composed of the light and heavy chains. The active site is located in the light chain. In terms of processing, cleaved by autocatalysis into a large and a small subunit and the autocatalytic cleavage is essential to the functional activation of the enzyme.

It is found in the membrane. It catalyses the reaction an N-terminal (5-L-glutamyl)-[peptide] + an alpha-amino acid = 5-L-glutamyl amino acid + an N-terminal L-alpha-aminoacyl-[peptide]. The enzyme catalyses glutathione + H2O = L-cysteinylglycine + L-glutamate. It carries out the reaction an S-substituted glutathione + H2O = an S-substituted L-cysteinylglycine + L-glutamate. The protein operates within sulfur metabolism; glutathione metabolism. Hydrolyzes and transfers gamma-glutamyl moieties from glutathione and other gamma-glutamyl compounds to acceptors. The chain is Glutathione hydrolase 7 from Bos taurus (Bovine).